A 62-amino-acid chain; its full sequence is uncharacterized protein (62 aa).

The protein localises to the plastid. Its subcellular location is the chloroplast. This is an uncharacterized protein from Guillardia theta (Cryptophyte).